Consider the following 338-residue polypeptide: 1-aminocyclopropane-1-carboxylate deaminase (338 aa).

The residue at position 51 (lysine 51) is an N6-(pyridoxal phosphate)lysine. The active-site Nucleophile is serine 78.

The protein belongs to the ACC deaminase/D-cysteine desulfhydrase family. In terms of assembly, homotrimer. Pyridoxal 5'-phosphate serves as cofactor.

The enzyme catalyses 1-aminocyclopropane-1-carboxylate + H2O = 2-oxobutanoate + NH4(+). Its function is as follows. Catalyzes a cyclopropane ring-opening reaction, the irreversible conversion of 1-aminocyclopropane-1-carboxylate (ACC) to ammonia and alpha-ketobutyrate. Allows growth on ACC as a nitrogen source. The chain is 1-aminocyclopropane-1-carboxylate deaminase from Variovorax paradoxus (strain S110).